The chain runs to 224 residues: Glutathione S-transferase D7 (224 aa).

One can recognise a GST N-terminal domain in the interval 2-83 (PNLDLYNFPM…YLVEKYGKPD (82 aa)). Glutathione is bound by residues 53 to 55 (HTI) and 67 to 69 (ESR). Residues 90–210 (DPQKRALINQ…LESLQQGKKF (121 aa)) form the GST C-terminal domain.

This sequence belongs to the GST superfamily. Delta family. In terms of assembly, homodimer.

The catalysed reaction is RX + glutathione = an S-substituted glutathione + a halide anion + H(+). Its function is as follows. Conjugation of reduced glutathione to a wide number of exogenous and endogenous hydrophobic electrophiles. May be involved in detoxification. The protein is Glutathione S-transferase D7 of Drosophila melanogaster (Fruit fly).